The sequence spans 203 residues: HTH-type transcriptional regulator CymR (203 aa).

Residues 13–73 (METQGKLIAA…ATFEWLYEQI (61 aa)) form the HTH tetR-type domain. The segment at residues 36-55 (RIADVPGAAGVSRGAQSHHF) is a DNA-binding region (H-T-H motif).

Its function is as follows. Involved in the repression of the cym and cmt operons which are responsible of the p-cymene degradation. The protein is HTH-type transcriptional regulator CymR of Pseudomonas putida (Arthrobacter siderocapsulatus).